The chain runs to 366 residues: Ribosomal RNA large subunit methyltransferase M (366 aa).

Residues Ser-188, 221-224 (CPGG), Asp-240, Asp-260, and Asp-277 contribute to the S-adenosyl-L-methionine site. Lys-306 functions as the Proton acceptor in the catalytic mechanism.

The protein belongs to the class I-like SAM-binding methyltransferase superfamily. RNA methyltransferase RlmE family. RlmM subfamily. In terms of assembly, monomer.

The protein localises to the cytoplasm. It carries out the reaction cytidine(2498) in 23S rRNA + S-adenosyl-L-methionine = 2'-O-methylcytidine(2498) in 23S rRNA + S-adenosyl-L-homocysteine + H(+). In terms of biological role, catalyzes the 2'-O-methylation at nucleotide C2498 in 23S rRNA. This is Ribosomal RNA large subunit methyltransferase M from Erwinia tasmaniensis (strain DSM 17950 / CFBP 7177 / CIP 109463 / NCPPB 4357 / Et1/99).